The following is a 106-amino-acid chain: MYAIVRSGGRQHKVAVGDIVEVDKISTGKVGDTVELSTLLVVDGDAVTSDPWVLAGIKVQAEIVDHHKGQKIDILRYKNKTGYRRRQGHRQQYTAIKVTEIPAAAK.

It belongs to the bacterial ribosomal protein bL21 family. As to quaternary structure, part of the 50S ribosomal subunit. Contacts protein L20.

Its function is as follows. This protein binds to 23S rRNA in the presence of protein L20. The chain is Large ribosomal subunit protein bL21 from Streptomyces coelicolor (strain ATCC BAA-471 / A3(2) / M145).